Here is a 24-residue protein sequence, read N- to C-terminus: Positive regulator of RepFIC repA1 expression (24 aa).

The chain is Positive regulator of RepFIC repA1 expression (repL) from Escherichia coli.